Reading from the N-terminus, the 154-residue chain is UPF0547 protein C16orf87 homolog (154 aa).

The segment at 43–119 (NAKHSEKSPP…KHEEEREKQE (77 aa)) is disordered. The segment covering 68–84 (VRREKINSTVNKDLENR) has biased composition (basic and acidic residues). S91 is modified (phosphoserine). The stretch at 104–132 (KSSSAKKHEEEREKQEKEIDIYANLSDEK) forms a coiled coil. Positions 109–119 (KKHEEEREKQE) are enriched in basic and acidic residues.

Belongs to the UPF0547 family.

This Mus musculus (Mouse) protein is UPF0547 protein C16orf87 homolog.